The following is a 504-amino-acid chain: ATP synthase subunit alpha, chloroplastic (504 aa).

170–177 (GDRQTGKT) is a binding site for ATP.

This sequence belongs to the ATPase alpha/beta chains family. In terms of assembly, F-type ATPases have 2 components, CF(1) - the catalytic core - and CF(0) - the membrane proton channel. CF(1) has five subunits: alpha(3), beta(3), gamma(1), delta(1), epsilon(1). CF(0) has four main subunits: a, b, b' and c.

It localises to the plastid. It is found in the chloroplast thylakoid membrane. It carries out the reaction ATP + H2O + 4 H(+)(in) = ADP + phosphate + 5 H(+)(out). In terms of biological role, produces ATP from ADP in the presence of a proton gradient across the membrane. The alpha chain is a regulatory subunit. The sequence is that of ATP synthase subunit alpha, chloroplastic from Triticum aestivum (Wheat).